The primary structure comprises 242 residues: ATP synthase subunit a (242 aa).

A run of 6 helical transmembrane segments spans residues 29-49, 84-104, 114-134, 140-160, 181-201, and 206-226; these read SAVAMIFVSIAASMLLITAFV, FFPLILTLFLFISLGNILGMV, IIVTFSLAMIVFTTTLVYGIY, FFSLFLPKNIPLWLAPIMVII, VAGHILLKIIAWSIVSLTWLF, and IALVIVLIGFELFISILQAYI.

Belongs to the ATPase A chain family. In terms of assembly, F-type ATPases have 2 components, CF(1) - the catalytic core - and CF(0) - the membrane proton channel. CF(1) has five subunits: alpha(3), beta(3), gamma(1), delta(1), epsilon(1). CF(0) has three main subunits: a(1), b(2) and c(9-12). The alpha and beta chains form an alternating ring which encloses part of the gamma chain. CF(1) is attached to CF(0) by a central stalk formed by the gamma and epsilon chains, while a peripheral stalk is formed by the delta and b chains.

It localises to the cell inner membrane. Its function is as follows. Key component of the proton channel; it plays a direct role in the translocation of protons across the membrane. In Orientia tsutsugamushi (strain Ikeda) (Rickettsia tsutsugamushi), this protein is ATP synthase subunit a.